Here is a 395-residue protein sequence, read N- to C-terminus: Tyrosine--tRNA ligase 2 (395 aa).

Positions 42–51 (PTAPDIHLGH) match the 'HIGH' region motif. The short motif at 226 to 230 (KMSKS) is the 'KMSKS' region element. Lys-229 lines the ATP pocket. Residues 334–394 (TPVANLLKDA…GKRKFARITI (61 aa)) form the S4 RNA-binding domain.

The protein belongs to the class-I aminoacyl-tRNA synthetase family. TyrS type 2 subfamily. In terms of assembly, homodimer.

It is found in the cytoplasm. It carries out the reaction tRNA(Tyr) + L-tyrosine + ATP = L-tyrosyl-tRNA(Tyr) + AMP + diphosphate + H(+). Catalyzes the attachment of tyrosine to tRNA(Tyr) in a two-step reaction: tyrosine is first activated by ATP to form Tyr-AMP and then transferred to the acceptor end of tRNA(Tyr). The sequence is that of Tyrosine--tRNA ligase 2 from Vibrio parahaemolyticus serotype O3:K6 (strain RIMD 2210633).